Here is a 92-residue protein sequence, read N- to C-terminus: Secreted RxLR effector protein 21 (92 aa).

The N-terminal stretch at 1–21 (MNLSTLLLTLACISQLHGGSA) is a signal peptide. The short motif at 30 to 33 (RQLR) is the RxLR element.

It belongs to the RxLR effector family.

Its subcellular location is the secreted. The protein resides in the host nucleus. The protein localises to the host cytoplasm. Secreted effector that completely suppresses the host cell death induced by cell death-inducing proteins. In Plasmopara viticola (Downy mildew of grapevine), this protein is Secreted RxLR effector protein 21.